Consider the following 253-residue polypeptide: MGGSESTGRKVSFGMDEEERVRVLRGVRLSDEVVTRMKDQSTWAASGAASGSATVPSKVGSSASHPAAASKDGAHKPTAAGVGHQYAEEDLYRRYEREQTLIQEELARLAKREKDAAHQRLSTSILREKKMADQERRKAEHLPADLDEWAKDLEHKEAELQNLNTFYREQLSSIEKKNLEIYRLTEEQFHTAATNAELRVKQRSYDPVCMDLQSNILKCYAENKQERLNCSDLAKEYQKCVSAAQKNLLFNHG.

Glycine 2 carries the N-myristoyl glycine lipid modification. The segment at lysine 38–valine 82 is disordered. The span at alanine 44–alanine 53 shows a compositional bias: low complexity. Residues alanine 87–alanine 116 adopt a coiled-coil conformation. Residues aspartate 206–leucine 248 form the CHCH domain. 2 short sequence motifs (cx9C motif) span residues cysteine 209–cysteine 219 and cysteine 230–cysteine 240. Cystine bridges form between cysteine 209/cysteine 240 and cysteine 219/cysteine 230.

This sequence belongs to the MICOS complex subunit Mic19 family. Metazoan Mic25 subfamily. In terms of assembly, component of the mitochondrial contact site and cristae organizing system (MICOS) complex (also known as MINOS or MitOS complex).

It localises to the mitochondrion inner membrane. In terms of biological role, component of the MICOS complex, a large protein complex of the mitochondrial inner membrane that plays crucial roles in the maintenance of crista junctions, inner membrane architecture, and formation of contact sites to the outer membrane. The polypeptide is MICOS complex subunit mic25-b (chchd6-b) (Xenopus laevis (African clawed frog)).